The following is a 93-amino-acid chain: UPF0358 protein RBAM_014700 (93 aa).

It belongs to the UPF0358 family.

This is UPF0358 protein RBAM_014700 from Bacillus velezensis (strain DSM 23117 / BGSC 10A6 / LMG 26770 / FZB42) (Bacillus amyloliquefaciens subsp. plantarum).